The chain runs to 97 residues: Putative septation protein SpoVG (97 aa).

Belongs to the SpoVG family.

In terms of biological role, essential for sporulation. Interferes with or is a negative regulator of the pathway leading to asymmetric septation. This Bacillus licheniformis (strain ATCC 14580 / DSM 13 / JCM 2505 / CCUG 7422 / NBRC 12200 / NCIMB 9375 / NCTC 10341 / NRRL NRS-1264 / Gibson 46) protein is Putative septation protein SpoVG.